The following is a 300-amino-acid chain: Protoheme IX farnesyltransferase (300 aa).

9 helical membrane passes run 31-51 (VMSL…NSLH), 52-72 (PFIS…AGAI), 92-112 (IVRG…MAFF), 123-145 (FLSA…MWLK), 152-172 (IVIG…SVSG), 179-199 (VILF…LALF), 225-245 (ILIY…VGMS), 247-267 (IIYL…SISL), and 280-300 (FFAY…FCRV).

This sequence belongs to the UbiA prenyltransferase family. Protoheme IX farnesyltransferase subfamily.

Its subcellular location is the cell inner membrane. It carries out the reaction heme b + (2E,6E)-farnesyl diphosphate + H2O = Fe(II)-heme o + diphosphate. The protein operates within porphyrin-containing compound metabolism; heme O biosynthesis; heme O from protoheme: step 1/1. Functionally, converts heme B (protoheme IX) to heme O by substitution of the vinyl group on carbon 2 of heme B porphyrin ring with a hydroxyethyl farnesyl side group. This is Protoheme IX farnesyltransferase from Rickettsia bellii (strain OSU 85-389).